We begin with the raw amino-acid sequence, 76 residues long: Large ribosomal subunit protein bL31 (76 aa).

Zn(2+) is bound by residues cysteine 16, cysteine 18, cysteine 36, and cysteine 39.

It belongs to the bacterial ribosomal protein bL31 family. Type A subfamily. As to quaternary structure, part of the 50S ribosomal subunit. The cofactor is Zn(2+).

Its function is as follows. Binds the 23S rRNA. The protein is Large ribosomal subunit protein bL31 of Syntrophobacter fumaroxidans (strain DSM 10017 / MPOB).